A 25-amino-acid polypeptide reads, in one-letter code: Hypotensin-2 (25 aa).

The disordered stretch occupies residues 1 to 25 (AEIDFSGIPEDIIKEIKETNAKPPA). At Ser6 the chain carries Phosphoserine. Positions 11-25 (DIIKEIKETNAKPPA) are enriched in basic and acidic residues.

Belongs to the non-disulfide-bridged peptide (NDBP) superfamily. In terms of tissue distribution, expressed by the venom gland.

It localises to the secreted. In terms of biological role, agonist of the B2 bradykinin receptor (BDKRB2). Potentiates the hypotensive effect of bradykinin (BK) and induces a direct vasorelaxing effect, independently of BK, by endothelium- and nitric oxide (NO)-dependent mechanisms in rat aortic ring preparations. Does not inhibit the angiotensin-converting enzyme (ACE). Also exerts proangiogenic, antiinflammatory, and antifibrogenic activities. Does not inhibit the angiotensin-converting enzyme (ACE) but weakly increases its activity, and weakly inhibits neprilysin (NEP) in a non-competitive manner. Exerts intermediate cytotoxicity and pro-inflammatory effects on mouse macrophages, and increases the phagocytic activity of these murine cells. Presents weak hemolytic activity at physiological concentrations (micromolar range), and weak lactate dehydrogenase (LDH) release from mast cells. Does not induce mast cell degranulation, and antimicrobial effects. In vivo, causes intense pain (but no edema formation), when injected in mice hind paws. Also induces discomfort and anxiety in mice, as it moderately diminishes locomotion and moderately increases rearing behavior. The sequence is that of Hypotensin-2 from Tityus serrulatus (Brazilian scorpion).